Consider the following 824-residue polypeptide: Leucine--tRNA ligase (824 aa).

The 'HIGH' region motif lies at 42 to 52 (PYPSGKIHMGH). The 'KMSKS' region motif lies at 581-585 (KMSKS). Lysine 584 is an ATP binding site.

Belongs to the class-I aminoacyl-tRNA synthetase family.

Its subcellular location is the cytoplasm. The enzyme catalyses tRNA(Leu) + L-leucine + ATP = L-leucyl-tRNA(Leu) + AMP + diphosphate. The chain is Leucine--tRNA ligase from Geobacter sp. (strain M21).